The chain runs to 73 residues: uncharacterized protein (73 aa).

The next 2 helical transmembrane spans lie at 7–27 and 47–67; these read LFSSLTFSLTVLFLLLLIPNL and YFGYPSLGILFAGILSPIIIL.

The protein resides in the cell membrane. This is an uncharacterized protein from Methanocaldococcus jannaschii (strain ATCC 43067 / DSM 2661 / JAL-1 / JCM 10045 / NBRC 100440) (Methanococcus jannaschii).